The following is a 436-amino-acid chain: MVIEEWKKSGIATKFPTYRNSALITTHSWQKGKRQDDGAEGLWRINDGIYDFTSFIDKHPGGPFWIRETKGTDITEAFEAHHLTTAPEKMIAKYKVRDAAEPRIYTLTLEEGGFYKTLKERVREQLKTIDKRPKKKSDLIHLGLVVSLYLLGIASAKYNSLLALVLASVALCWTVIVSHNYFHRRDNWQMYAFNLGMMNFAAWRVSHALSHHIYPNSYFDLELSMFEPLLCWVPNPHIKSKLMRYVSWVTEPVAYALAFFIQMGTRIFYSLRHTNILYWHDLLPLTIPIAIYLGTGGSLGIWICVRQWLAMTSIASFSFCLIGLNAAHHDPEIYHEGDANREDRDWGLFQVDTIIDRGDLKWSQFLVLTHFGDHVLHHLFPTLDHGLLPALYPVLYQTLDEFKGHLRECNHIEHMIGQHKQLLRIEPNPRAPGAGK.

In terms of domain architecture, Cytochrome b5 heme-binding spans P16–A100. The heme site is built by H59 and H82.

In terms of tissue distribution, muscle.

Functionally, may play a role in muscle cell metabolism. This Drosophila melanogaster (Fruit fly) protein is Cytochrome b5-related protein (Cyt-b5-r).